The primary structure comprises 534 residues: Allene oxide synthase 1, chloroplastic (534 aa).

Disordered regions lie at residues 1-31 (MASTSLSLPSLKLQFPSHTSSSSRKNSSSYR) and 43-71 (EIPPYISSPSQSPSSSSSPPVKQAKLPAQ). The transit peptide at 1-69 (MASTSLSLPS…SPPVKQAKLP (69 aa)) directs the protein to the chloroplast. 2 stretches are compositionally biased toward low complexity: residues 17–31 (SHTSSSSRKNSSSYR) and 43–62 (EIPPYISSPSQSPSSSSSPP). Lys149, His180, and Lys184 together coordinate heme b. Residues Asn337 and Lys343 each contribute to the (13S)-hydroperoxy-(9Z,11E)-octadecadienoate site. Position 337 (Asn337) interacts with (13S)-hydroperoxy-(9Z,11E,15Z)-octadecatrienoate. Residues Lys485 and Cys487 each coordinate heme b.

It belongs to the cytochrome P450 family. It depends on heme b as a cofactor. As to expression, expressed in flowers. Detected in stems and roots, but not in leaves and fruits under non-inducing conditions.

It is found in the plastid. It localises to the chloroplast. It catalyses the reaction (13S)-hydroperoxy-(9Z,11E,15Z)-octadecatrienoate = (9Z,13S,15Z)-12,13-epoxyoctadeca-9,11,15-trienoate + H2O. It carries out the reaction (13S)-hydroperoxy-(9Z,11E)-octadecadienoate = (9Z,13S)-12,13-epoxyoctadeca-9,11-dienoate + H2O. Cytochrome P450 of the CYP74A subfamily involved in the biosynthesis of jasmonic acid from lipoxygenase-derived hydroperoxides of free fatty acids. Catalyzes the synthesis of unstable allene oxide, which is further converted spontaneously by hydrolysis or cyclization. Can use 13S-hydroperoxy-9(Z),11(E),15(Z)-octadecatrienoic acid (13-HPOT) and 13S-hydroperoxy-9(Z),11(E)-octadecadienoic acid (13-HPOD) as substrates. This Solanum lycopersicum (Tomato) protein is Allene oxide synthase 1, chloroplastic.